A 76-amino-acid polypeptide reads, in one-letter code: Small ribosomal subunit protein bS18 (76 aa).

Belongs to the bacterial ribosomal protein bS18 family. In terms of assembly, part of the 30S ribosomal subunit. Forms a tight heterodimer with protein bS6.

Functionally, binds as a heterodimer with protein bS6 to the central domain of the 16S rRNA, where it helps stabilize the platform of the 30S subunit. This chain is Small ribosomal subunit protein bS18, found in Aeromonas salmonicida (strain A449).